The chain runs to 346 residues: tRNA N6-adenosine threonylcarbamoyltransferase (346 aa).

The Fe cation site is built by histidine 111 and histidine 115. Residues 134–138 (LVSGG), aspartate 167, glycine 180, and asparagine 277 contribute to the substrate site. Aspartate 305 lines the Fe cation pocket.

Belongs to the KAE1 / TsaD family. The cofactor is Fe(2+).

It localises to the cytoplasm. It carries out the reaction L-threonylcarbamoyladenylate + adenosine(37) in tRNA = N(6)-L-threonylcarbamoyladenosine(37) in tRNA + AMP + H(+). In terms of biological role, required for the formation of a threonylcarbamoyl group on adenosine at position 37 (t(6)A37) in tRNAs that read codons beginning with adenine. Is involved in the transfer of the threonylcarbamoyl moiety of threonylcarbamoyl-AMP (TC-AMP) to the N6 group of A37, together with TsaE and TsaB. TsaD likely plays a direct catalytic role in this reaction. The polypeptide is tRNA N6-adenosine threonylcarbamoyltransferase (Bordetella parapertussis (strain 12822 / ATCC BAA-587 / NCTC 13253)).